Consider the following 510-residue polypeptide: MDIRAAEISAILKDQIKNFGQDAEVSEVGQVLSVGDGIARVYGLDNVQAGEMVEFENGTRGMALNLESDNVGIVIFGADREIKEGQTVKRTRAIVDTPVGKGLLGRVVDALGNPIDGKGPIQSDERKRVDVKAPGIIPRKSVHEPMATGLKAIDALIPIGRGQRELIIGDRQTGKTAVALDTILNQKPLNVAGAPESQKLYCVYVAVGQKRSTVAQFVKVLEEQGALEYSIVVAATASDPAPMQYLAPFTGCTMGEYFRDNGMHAVIIYDDLSKQAVAYRQMSLLLRRPPGREAYPGDVFYLHSRLLERSAKLNDSLGAGSLTALPVIETQANDVSAYIPTNVISITDGQIFLETDLFFQGIRPAVNVGLSVSRVGSSAQTKAMKKVAGKIKGELAQYREMAAFAQFGSDLDASTQRLLNRGARLTELLKQPQFSPLKMEEQVVVIWAGTNGYLDALPLNKVRAFEDGLLSLLRGKHVDILNAIRDSRDLSDDNAAKLKSVVDGFVKTFA.

Position 169-176 (169-176 (GDRQTGKT)) interacts with ATP.

The protein belongs to the ATPase alpha/beta chains family. F-type ATPases have 2 components, CF(1) - the catalytic core - and CF(0) - the membrane proton channel. CF(1) has five subunits: alpha(3), beta(3), gamma(1), delta(1), epsilon(1). CF(0) has three main subunits: a(1), b(2) and c(9-12). The alpha and beta chains form an alternating ring which encloses part of the gamma chain. CF(1) is attached to CF(0) by a central stalk formed by the gamma and epsilon chains, while a peripheral stalk is formed by the delta and b chains.

It is found in the cell inner membrane. It carries out the reaction ATP + H2O + 4 H(+)(in) = ADP + phosphate + 5 H(+)(out). Its function is as follows. Produces ATP from ADP in the presence of a proton gradient across the membrane. The alpha chain is a regulatory subunit. This Afipia carboxidovorans (strain ATCC 49405 / DSM 1227 / KCTC 32145 / OM5) (Oligotropha carboxidovorans) protein is ATP synthase subunit alpha.